The chain runs to 381 residues: Creatine kinase M-type (381 aa).

Residues 11-98 (KLNYKPEEEY…FDPIISDRHG (88 aa)) enclose the Phosphagen kinase N-terminal domain. The Phosphagen kinase C-terminal domain maps to 125–367 (YVLSSRVRTG…KLMVEMEKKL (243 aa)). Position 128 to 132 (128 to 132 (SSRVR)) interacts with ATP. Ser-164 bears the Phosphoserine mark. Position 166 is a phosphothreonine (Thr-166). A Phosphoserine modification is found at Ser-178. Thr-180 bears the Phosphothreonine mark. His-191 contributes to the ATP binding site. The residue at position 199 (Ser-199) is a Phosphoserine. ATP-binding residues include Arg-236 and Arg-292. 2 positions are modified to phosphothreonine: Thr-313 and Thr-322. Residues 320 to 325 (RGTGGV) and Asp-335 each bind ATP. Ser-372 carries the post-translational modification Phosphoserine.

Belongs to the ATP:guanido phosphotransferase family. Dimer of identical or non-identical chains, which can be either B (brain type) or M (muscle type). With MM being the major form in skeletal muscle and myocardium, MB existing in myocardium, and BB existing in many tissues, especially brain.

Its subcellular location is the cytoplasm. The catalysed reaction is creatine + ATP = N-phosphocreatine + ADP + H(+). In terms of biological role, reversibly catalyzes the transfer of phosphate between ATP and various phosphogens (e.g. creatine phosphate). Creatine kinase isoenzymes play a central role in energy transduction in tissues with large, fluctuating energy demands, such as skeletal muscle, heart, brain and spermatozoa. This chain is Creatine kinase M-type (CKM), found in Homo sapiens (Human).